The sequence spans 198 residues: Pyridoxal 5'-phosphate synthase subunit PdxT (198 aa).

50–52 (GES) is an L-glutamine binding site. Residue C82 is the Nucleophile of the active site. Residues R111 and 140–141 (IR) each bind L-glutamine. Catalysis depends on charge relay system residues H177 and E179.

The protein belongs to the glutaminase PdxT/SNO family. As to quaternary structure, in the presence of PdxS, forms a dodecamer of heterodimers. Only shows activity in the heterodimer.

It carries out the reaction aldehydo-D-ribose 5-phosphate + D-glyceraldehyde 3-phosphate + L-glutamine = pyridoxal 5'-phosphate + L-glutamate + phosphate + 3 H2O + H(+). The catalysed reaction is L-glutamine + H2O = L-glutamate + NH4(+). It participates in cofactor biosynthesis; pyridoxal 5'-phosphate biosynthesis. In terms of biological role, catalyzes the hydrolysis of glutamine to glutamate and ammonia as part of the biosynthesis of pyridoxal 5'-phosphate. The resulting ammonia molecule is channeled to the active site of PdxS. The chain is Pyridoxal 5'-phosphate synthase subunit PdxT from Leifsonia xyli subsp. xyli (strain CTCB07).